The sequence spans 297 residues: Mycothiol acetyltransferase (297 aa).

2 N-acetyltransferase domains span residues 8–153 (DALD…PPLP) and 156–297 (VALR…QYAL). Glu36 contributes to the 1D-myo-inositol 2-(L-cysteinylamino)-2-deoxy-alpha-D-glucopyranoside binding site. Acetyl-CoA is bound at residue 80-82 (LAV). Positions 183, 223, and 231 each coordinate 1D-myo-inositol 2-(L-cysteinylamino)-2-deoxy-alpha-D-glucopyranoside. Acetyl-CoA is bound by residues 235–237 (VGV) and 242–248 (QGGGLGK). Tyr269 contributes to the 1D-myo-inositol 2-(L-cysteinylamino)-2-deoxy-alpha-D-glucopyranoside binding site. Position 274–279 (274–279 (NSPAVR)) interacts with acetyl-CoA.

This sequence belongs to the acetyltransferase family. MshD subfamily. As to quaternary structure, monomer.

It carries out the reaction 1D-myo-inositol 2-(L-cysteinylamino)-2-deoxy-alpha-D-glucopyranoside + acetyl-CoA = mycothiol + CoA + H(+). Functionally, catalyzes the transfer of acetyl from acetyl-CoA to desacetylmycothiol (Cys-GlcN-Ins) to form mycothiol. The sequence is that of Mycothiol acetyltransferase from Actinosynnema mirum (strain ATCC 29888 / DSM 43827 / JCM 3225 / NBRC 14064 / NCIMB 13271 / NRRL B-12336 / IMRU 3971 / 101).